The primary structure comprises 610 residues: MIRAFSFPVSPERGRLRGWLEGSLAGLCELHWLRERQEYRVQQALRLAQPGMGGAEAEDEEDAEEDEDAAAARRAAAALEEQLEALPGLIWDLGQQLGDLSLESGGLDQESGRSSGFYEDPSSTGGPDSPPSTFCGDSGFSGSGSYGRLGPSDPRGIYASERPKSLGDASPSAPESVGARVAVPRSFSAPYPTAAAGAETCSSAERRARAGPFLTPSPLHAVALRSPRPSGRVPCGSPDGAASRPLDGYISALLRRRRRRGAGQPRTSPGGADGGARRQNGARPRPPEASPPPGGARPAREPSTERAWAAAWEAEVPPEPAPPAAASPPSSPAEGRLVKAQYIPGAPAASRGLPGRAARRRAPPLTRGRSVEQSPPRERPRAAGRRGRLAEPSGRRGSPRARKAARSQSETSLLGRAHAAPPPKYPTAERDEPRPPRPRRGPAPTPTVQACRRWRSTAEIDAPDGRRPRARVPAPRGPAPSPSAPPRRLLYGCAGSDSECSAVGRPVPLGRRMPSGCAPGGYGESESSASEGESPAFSSASSDSDGSGGLVWPQQLVAAAGASPSGPGGAAGGGTPAGPAKVFVKIKASHALKKKILRFRSGSLKVMTTV.

S6 is modified (phosphoserine). Disordered stretches follow at residues 50–76 (PGMG…RRAA), 102–179 (LESG…SVGA), and 200–579 (TCSS…PAGP). Positions 56-69 (EAEDEEDAEEDEDA) are enriched in acidic residues. Residues 63–87 (AEEDEDAAAARRAAAALEEQLEALP) adopt a coiled-coil conformation. Low complexity predominate over residues 120–138 (DPSSTGGPDSPPSTFCGDS). Residues S165 and S237 each carry the phosphoserine modification. R255 carries the post-translational modification Omega-N-methylarginine. The span at 317–331 (PPEPAPPAAASPPSS) shows a compositional bias: pro residues. The segment covering 344–356 (PGAPAASRGLPGR) has biased composition (low complexity). Residues S409 and S456 each carry the phosphoserine modification. Over residues 475–485 (PRGPAPSPSAP) the composition is skewed to pro residues. Positions 524 to 545 (ESESSASEGESPAFSSASSDSD) are enriched in low complexity. Gly residues predominate over residues 566 to 576 (GPGGAAGGGTP). Positions 607 to 610 (MTTV) match the PDZ-binding motif.

This sequence belongs to the dapper family. Can form homodimers and heterodimers with DACT1 or DACT3. Interacts with CSNK1D, PKA catalytic subunit, PKC-type kinase, DVL1, DVL2, DVL3, VANGL1, VANGL2 and CTNND1. Expressed in brain and uterus.

In terms of biological role, may be involved in regulation of intracellular signaling pathways during development. Specifically thought to play a role in canonical and/or non-canonical Wnt signaling pathways through interaction with DSH (Dishevelled) family proteins. The chain is Dapper homolog 3 (Dact3) from Mus musculus (Mouse).